The chain runs to 801 residues: Mitochondrial intermediate peptidase (801 aa).

Residues 1–41 constitute a mitochondrion transit peptide; sequence MKPQLLTPLRRRPWTCRQCLQRLQRLQQQTRRSFETAASPA. The interval 31-54 is disordered; the sequence is RRSFETAASPAPGHTQVDYIPADA. Zn(2+) is bound at residue histidine 565. The active site involves glutamate 566. Positions 569 and 572 each coordinate Zn(2+).

It belongs to the peptidase M3 family. Requires Zn(2+) as cofactor.

It localises to the mitochondrion matrix. The enzyme catalyses Release of an N-terminal octapeptide as second stage of processing of some proteins imported into the mitochondrion.. Functionally, cleaves proteins, imported into the mitochondrion, to their mature size. While most mitochondrial precursor proteins are processed to the mature form in one step by mitochondrial processing peptidase (MPP), the sequential cleavage by MIP of an octapeptide after initial processing by MPP is a required step for a subgroup of nuclear-encoded precursor proteins destined for the matrix or the inner membrane. In Aspergillus clavatus (strain ATCC 1007 / CBS 513.65 / DSM 816 / NCTC 3887 / NRRL 1 / QM 1276 / 107), this protein is Mitochondrial intermediate peptidase (oct1).